The sequence spans 146 residues: MRKKIIIYTDGACSGNPGKGGWGALLMFGELNREISGYSPATTNNRMELMAAIQALEALKEPCDVDLYSDSSYLVNAIKLGWLKKWSSGGWTTASRKPVENQDLWKKILQLIKLHNVTFHKVKGHSDNEYNNRCDYLARQAIKNNR.

The 143-residue stretch at 1–143 (MRKKIIIYTD…CDYLARQAIK (143 aa)) folds into the RNase H type-1 domain. Residues Asp-10, Glu-48, Asp-70, and Asp-135 each coordinate Mg(2+).

The protein belongs to the RNase H family. In terms of assembly, monomer. Mg(2+) is required as a cofactor.

The protein resides in the cytoplasm. It carries out the reaction Endonucleolytic cleavage to 5'-phosphomonoester.. Endonuclease that specifically degrades the RNA of RNA-DNA hybrids. The polypeptide is Ribonuclease H (Prosthecochloris aestuarii (strain DSM 271 / SK 413)).